Reading from the N-terminus, the 557-residue chain is Organic cation/carnitine transporter 2 (557 aa).

Over 1 to 20 (MRDYDEVTAFLGEWGPFQRL) the chain is Cytoplasmic. Residues 21 to 41 (IFFLLSASIIPNGFTGLSSVF) form a helical membrane-spanning segment. The Extracellular portion of the chain corresponds to 42–142 (LIATPEHRCR…NLVCEDDWKA (101 aa)). Residues N57, N64, and N91 are each glycosylated (N-linked (GlcNAc...) asparagine). Residues 143-163 (PLTISLFFVGVLLGSFISGQL) traverse the membrane as a helical segment. Topologically, residues 164–172 (SDRFGRKNV) are cytoplasmic. A helical membrane pass occupies residues 173–193 (LFVTMGMQTGFSFLQIFSKNF). The Extracellular segment spans residues 194-197 (EMFV). Residues 198-218 (VLFVLVGMGQISNYVAAFVLG) form a helical membrane-spanning segment. Residue 218–225 (GTEILGKS) participates in ATP binding. The Cytoplasmic segment spans residues 219–232 (TEILGKSVRIIFST). Residues 233 to 253 (LGVCIFYAFGYMVLPLFAYFI) traverse the membrane as a helical segment. Residues 254–257 (RDWR) lie on the Extracellular side of the membrane. The helical transmembrane segment at 258 to 278 (MLLVALTMPGVLCVALWWFIP) threads the bilayer. Residues 279–341 (ESPRWLISQG…LDLLRTWNIR (63 aa)) are Cytoplasmic-facing. A helical membrane pass occupies residues 342 to 362 (MVTIMSIMLWMTISVGYFGLS). Over 363–373 (LDTPNLHGDIF) the chain is Extracellular. Residues 374–394 (VNCFLSAMVEVPAYVLAWLLL) form a helical membrane-spanning segment. Over 395–406 (QYLPRRYSMATA) the chain is Cytoplasmic. Residues 407-427 (LFLGGSVLLFMQLVPPDLYYL) form a helical membrane-spanning segment. Over 428 to 430 (ATV) the chain is Extracellular. A helical membrane pass occupies residues 431–451 (LVMVGKFGVTAAFSMVYVYTA). Residues 452–462 (ELYPTVVRNMG) are Cytoplasmic-facing. Residues 463–483 (VGVSSTASRLGSILSPYFVYL) traverse the membrane as a helical segment. The Extracellular segment spans residues 484 to 488 (GAYDR). Y486 carries the phosphotyrosine modification. The helical transmembrane segment at 489-509 (FLPYILMGSLTILTAILTLFL) threads the bilayer. The disordered stretch occupies residues 535-557 (TPSHTRMLKDGQERPTILKSTAF). T550 carries the post-translational modification Phosphothreonine.

The protein belongs to the major facilitator (TC 2.A.1) superfamily. Organic cation transporter (TC 2.A.1.19) family. In terms of assembly, interacts with PDZK1. Glycosylated. Glycosylation affects the expression levels. Post-translationally, not glycosylated. In terms of tissue distribution, strongly expressed in kidney, skeletal muscle, heart and placenta. Primarily expressed by surface epithelial cells of the colon (at protein level). Expressed in CD68 macrophage and CD43 T-cells but not in CD20 B-cells. In testis, localized to Sertoli cell basal membranes, peritubular myoid cells and Leydig cells.

Its subcellular location is the cell membrane. The protein localises to the apical cell membrane. It is found in the basal cell membrane. It localises to the endoplasmic reticulum. It catalyses the reaction (R)-carnitine(out) + Na(+)(out) = (R)-carnitine(in) + Na(+)(in). The catalysed reaction is glycine betaine(out) + Na(+)(out) = glycine betaine(in) + Na(+)(in). The enzyme catalyses glycine betaine(out) + (R)-carnitine(in) = glycine betaine(in) + (R)-carnitine(out). It carries out the reaction O-butanoyl-(R)-carnitine(out) + Na(+)(out) = O-butanoyl-(R)-carnitine(in) + Na(+)(in). It catalyses the reaction O-acetyl-(R)-carnitine(out) + Na(+)(out) = O-acetyl-(R)-carnitine(in) + Na(+)(in). The catalysed reaction is O-propanoyl-(R)-carnitine(out) + Na(+)(out) = O-propanoyl-(R)-carnitine(in) + Na(+)(in). The enzyme catalyses (S)-carnitine(out) + Na(+)(out) = (S)-carnitine(in) + Na(+)(in). It carries out the reaction an O-acyl-(R)-carnitine(out) + Na(+)(out) = an O-acyl-(R)-carnitine(in) + Na(+)(in). It catalyses the reaction L-glutamyl-L-arginyl-glycyl-L-methionyl-L-threonine(out) + Na(+)(out) = L-glutamyl-L-arginyl-glycyl-L-methionyl-L-threonine(in) + Na(+)(in). The catalysed reaction is N,N-dimethylglycine(out) + Na(+)(out) = N,N-dimethylglycine(in) + Na(+)(in). Inhibited by emetine, quinidine and verapamil. The IC(50) of emetine is 4.2 uM. Not inhibited by valproic acid. Transport of (R)-carnitine is stimulated by cholesterol in the plasma membrane. In terms of biological role, sodium-ion dependent, high affinity carnitine transporter. Involved in the active cellular uptake of carnitine. Transports one sodium ion with one molecule of carnitine. Also transports organic cations such as tetraethylammonium (TEA) without the involvement of sodium. Relative uptake activity ratio of carnitine to TEA is 11.3. In intestinal epithelia, transports the quorum-sensing pentapeptide CSF (competence and sporulation factor) from B.subtilis which induces cytoprotective heat shock proteins contributing to intestinal homeostasis. May also contribute to regulate the transport of organic compounds in testis across the blood-testis-barrier. Retained in the ER, unable to perform carnitine uptake. The protein is Organic cation/carnitine transporter 2 of Homo sapiens (Human).